The chain runs to 396 residues: Phosphoglycerate kinase (396 aa).

Residues 21-23 (DFN), Arg36, 59-62 (HLGK), Arg119, and Arg156 each bind substrate. ATP is bound by residues Lys206, Gly294, Glu325, and 352 to 355 (GGDS).

Belongs to the phosphoglycerate kinase family. In terms of assembly, monomer.

It localises to the cytoplasm. The catalysed reaction is (2R)-3-phosphoglycerate + ATP = (2R)-3-phospho-glyceroyl phosphate + ADP. The protein operates within carbohydrate degradation; glycolysis; pyruvate from D-glyceraldehyde 3-phosphate: step 2/5. This is Phosphoglycerate kinase from Listeria monocytogenes serotype 4a (strain HCC23).